The primary structure comprises 150 residues: Large ribosomal subunit protein bL9 (150 aa).

This sequence belongs to the bacterial ribosomal protein bL9 family.

In terms of biological role, binds to the 23S rRNA. The polypeptide is Large ribosomal subunit protein bL9 (Streptococcus pyogenes serotype M5 (strain Manfredo)).